A 624-amino-acid chain; its full sequence is Laccase-1 (624 aa).

A signal peptide spans 1 to 20 (MRGVVKLFFLSCSLVSLVSS). Plastocyanin-like domains follow at residues 69 to 183 (TKAL…HSPN) and 195 to 355 (DRIV…VVRY). Cu cation is bound by residues H117, H119, H162, and H164. Cysteines 138 and 578 form a disulfide. Residues N242, N320, and N430 are each glycosylated (N-linked (GlcNAc...) asparagine). In terms of domain architecture, Plastocyanin-like 3 spans 469–562 (IIINNLDGVI…GKLAVVVIQP (94 aa)). The Cu cation site is built by H480, H483, and H485. N503 carries N-linked (GlcNAc...) asparagine glycosylation. 4 residues coordinate Cu cation: H543, C544, H545, and H549. The disordered stretch occupies residues 582-603 (DPNAFGPARRSPSPSIQSSKTS). The span at 592–603 (SPSPSIQSSKTS) shows a compositional bias: low complexity.

Belongs to the multicopper oxidase family. It depends on Cu cation as a cofactor.

It localises to the secreted. The protein resides in the cell wall. The catalysed reaction is 4 hydroquinone + O2 = 4 benzosemiquinone + 2 H2O. In terms of biological role, laccase that catalyzes the oxidation of certain aromatic compounds, including L-dopa, to quinones, which then polymerize to melanin. Able to oxidize a wide variety of aromatic diphenol and diamino groups in the ortho, meta, and para positions but not monophenolic groups such as in phenol, tyramine, or tyrosine. Plays an important role in virulence. Plays a role in dissemination to extrapulmonary sites but is not involved in pulmonary growth or in elicitation of cellular immune responses in the lung. This Cryptococcus neoformans var. grubii serotype A (strain H99 / ATCC 208821 / CBS 10515 / FGSC 9487) (Filobasidiella neoformans var. grubii) protein is Laccase-1 (LAC1).